A 299-amino-acid chain; its full sequence is NAD kinase (299 aa).

The active-site Proton acceptor is the Asp78. Residues 78–79 (DG), 151–152 (ND), Lys162, Arg179, Asp181, 192–197 (TAYALS), and Gln252 contribute to the NAD(+) site.

Belongs to the NAD kinase family. It depends on a divalent metal cation as a cofactor.

The protein resides in the cytoplasm. It carries out the reaction NAD(+) + ATP = ADP + NADP(+) + H(+). Functionally, involved in the regulation of the intracellular balance of NAD and NADP, and is a key enzyme in the biosynthesis of NADP. Catalyzes specifically the phosphorylation on 2'-hydroxyl of the adenosine moiety of NAD to yield NADP. The chain is NAD kinase from Coxiella burnetii (strain CbuG_Q212) (Coxiella burnetii (strain Q212)).